The chain runs to 355 residues: Alanine racemase (355 aa).

The Proton acceptor; specific for D-alanine role is filled by Lys34. Lys34 is subject to N6-(pyridoxal phosphate)lysine. Position 133 (Arg133) interacts with substrate. Catalysis depends on Tyr249, which acts as the Proton acceptor; specific for L-alanine. A substrate-binding site is contributed by Met297.

The protein belongs to the alanine racemase family. The cofactor is pyridoxal 5'-phosphate.

It catalyses the reaction L-alanine = D-alanine. It functions in the pathway amino-acid biosynthesis; D-alanine biosynthesis; D-alanine from L-alanine: step 1/1. Its function is as follows. Catalyzes the interconversion of L-alanine and D-alanine. May also act on other amino acids. This is Alanine racemase (alr) from Rickettsia akari (strain Hartford).